We begin with the raw amino-acid sequence, 318 residues long: Transcriptional regulator NovG (318 aa).

The segment covering 146-156 has biased composition (polar residues); that stretch reads VASLRSSSTAG. A disordered region spans residues 146–176; the sequence is VASLRSSSTAGTVGRRTGQDGRSRPNDGTDG. Residues 162–176 are compositionally biased toward basic and acidic residues; that stretch reads TGQDGRSRPNDGTDG.

The protein belongs to the ParB family.

In terms of biological role, transcription regulator that specifically activates expression of genes involved in the novobiocin biosynthesis pathway. Binds 5'-GTTCRACTG(N)(11)CRGTYGAAC-3' DNA sequence. In Streptomyces niveus (Streptomyces spheroides), this protein is Transcriptional regulator NovG (novG).